Here is a 161-residue protein sequence, read N- to C-terminus: Transcriptional repressor NrdR (161 aa).

Positions 1-23 are disordered; sequence MRCPFCGHPDTQVKDSRPAEDGN. A zinc finger spans residues 3 to 34; it reads CPFCGHPDTQVKDSRPAEDGNAIRRRRQCPSC. The span at 11 to 23 shows a compositional bias: basic and acidic residues; the sequence is TQVKDSRPAEDGN. In terms of domain architecture, ATP-cone spans 49–139; that stretch reads LTVMKKSGRR…VYKDFHKVED (91 aa).

The protein belongs to the NrdR family. Zn(2+) serves as cofactor.

In terms of biological role, negatively regulates transcription of bacterial ribonucleotide reductase nrd genes and operons by binding to NrdR-boxes. This chain is Transcriptional repressor NrdR, found in Maricaulis maris (strain MCS10) (Caulobacter maris).